A 556-amino-acid chain; its full sequence is Glucose-6-phosphate isomerase (556 aa).

Glutamate 360 (proton donor) is an active-site residue. Active-site residues include histidine 391 and lysine 519.

Belongs to the GPI family.

It localises to the cytoplasm. It catalyses the reaction alpha-D-glucose 6-phosphate = beta-D-fructose 6-phosphate. The protein operates within carbohydrate biosynthesis; gluconeogenesis. It functions in the pathway carbohydrate degradation; glycolysis; D-glyceraldehyde 3-phosphate and glycerone phosphate from D-glucose: step 2/4. In terms of biological role, catalyzes the reversible isomerization of glucose-6-phosphate to fructose-6-phosphate. The chain is Glucose-6-phosphate isomerase from Acinetobacter baumannii (strain AB0057).